The following is a 468-amino-acid chain: Glutamate--tRNA ligase (468 aa).

The 'HIGH' region motif lies at 8-18 (PSPTGFLHVGG). Zn(2+)-binding residues include Cys-97, Cys-99, Cys-124, and Asp-126. The 'KMSKS' region motif lies at 236 to 240 (KLSKR). Lys-239 lines the ATP pocket.

This sequence belongs to the class-I aminoacyl-tRNA synthetase family. Glutamate--tRNA ligase type 1 subfamily. As to quaternary structure, monomer. Zn(2+) serves as cofactor.

Its subcellular location is the cytoplasm. The enzyme catalyses tRNA(Glu) + L-glutamate + ATP = L-glutamyl-tRNA(Glu) + AMP + diphosphate. In terms of biological role, catalyzes the attachment of glutamate to tRNA(Glu) in a two-step reaction: glutamate is first activated by ATP to form Glu-AMP and then transferred to the acceptor end of tRNA(Glu). This chain is Glutamate--tRNA ligase, found in Francisella tularensis subsp. mediasiatica (strain FSC147).